A 501-amino-acid chain; its full sequence is Lysine--tRNA ligase (501 aa).

Positions 402 and 409 each coordinate Mg(2+).

It belongs to the class-II aminoacyl-tRNA synthetase family. In terms of assembly, homodimer. The cofactor is Mg(2+).

It is found in the cytoplasm. It catalyses the reaction tRNA(Lys) + L-lysine + ATP = L-lysyl-tRNA(Lys) + AMP + diphosphate. The protein is Lysine--tRNA ligase of Helicobacter pylori (strain HPAG1).